A 69-amino-acid polypeptide reads, in one-letter code: Putative membrane protein insertion efficiency factor (69 aa).

Belongs to the UPF0161 family.

The protein resides in the cell membrane. In terms of biological role, could be involved in insertion of integral membrane proteins into the membrane. This chain is Putative membrane protein insertion efficiency factor, found in Clostridium kluyveri (strain NBRC 12016).